Consider the following 551-residue polypeptide: Electron transfer flavoprotein-ubiquinone oxidoreductase (551 aa).

An FAD-binding site is contributed by 10–24; it reads VVIVGAGPAGLSAAC. Residues C496, C520, C523, and C526 each contribute to the [4Fe-4S] cluster site. The 30-residue stretch at 511 to 540 folds into the 4Fe-4S ferredoxin-type domain; it reads KRFQINAQNCVHCKTCDIKDPAQNITWVAP.

It belongs to the ETF-QO/FixC family. [4Fe-4S] cluster serves as cofactor. The cofactor is FAD.

The enzyme catalyses a ubiquinone + reduced [electron-transfer flavoprotein] = a ubiquinol + oxidized [electron-transfer flavoprotein] + H(+). In terms of biological role, accepts electrons from ETF and reduces ubiquinone. This Pseudomonas aeruginosa (strain ATCC 15692 / DSM 22644 / CIP 104116 / JCM 14847 / LMG 12228 / 1C / PRS 101 / PAO1) protein is Electron transfer flavoprotein-ubiquinone oxidoreductase.